The primary structure comprises 426 residues: Probable serine/threonine-protein kinase PBL3 (426 aa).

The tract at residues Met1–Leu42 is disordered. Gly2 carries the N-myristoyl glycine lipid modification. Cys4 carries the S-palmitoyl cysteine lipid modification. A compositionally biased stretch (low complexity) spans Ser7–Leu42. Phosphothreonine is present on Thr72. The Protein kinase domain maps to Phe83–Leu366. Residues Leu89–Val97 and Lys121 contribute to the ATP site. Tyr166 is modified (phosphotyrosine). Residue Asp216 is the Proton acceptor of the active site. The residue at position 250 (Ser250) is a Phosphoserine. A phosphothreonine mark is found at Thr251 and Thr256. Tyr264 carries the post-translational modification Phosphotyrosine. Positions Glu367–Gln394 are enriched in polar residues. A disordered region spans residues Glu367–Arg426.

Belongs to the protein kinase superfamily. Ser/Thr protein kinase family. In terms of assembly, interacts with the Xanthomonas campestris effector XopAC/AvrAC. In terms of tissue distribution, strongly expressed in leaves, moderately in flowers, and barely in roots.

It localises to the cell membrane. It is found in the nucleus. It catalyses the reaction L-seryl-[protein] + ATP = O-phospho-L-seryl-[protein] + ADP + H(+). The catalysed reaction is L-threonyl-[protein] + ATP = O-phospho-L-threonyl-[protein] + ADP + H(+). In terms of biological role, may be involved in plant defense signaling. The protein is Probable serine/threonine-protein kinase PBL3 of Arabidopsis thaliana (Mouse-ear cress).